The sequence spans 440 residues: Xylose isomerase (440 aa).

Residues His101 and Asp104 contribute to the active site. Positions 232, 268, 271, 296, 307, 309, and 339 each coordinate Mg(2+).

Belongs to the xylose isomerase family. Homotetramer. Requires Mg(2+) as cofactor.

It is found in the cytoplasm. The enzyme catalyses alpha-D-xylose = alpha-D-xylulofuranose. This Enterobacter sp. (strain 638) protein is Xylose isomerase.